A 136-amino-acid polypeptide reads, in one-letter code: ATP synthase F(0) complex subunit C1, mitochondrial (136 aa).

Residues 1 to 61 (MQTTGALLIS…REFQTSVVSR (61 aa)) constitute a mitochondrion transit peptide. The chain crosses the membrane as a helical span at residues 77–97 (VGVAGSGAGIGTVFGSLIIGY). Residue K104 is modified to N6,N6,N6-trimethyllysine. A helical transmembrane segment spans residues 112-132 (ILGFALSEAMGLFCLMVAFLI).

It belongs to the ATPase C chain family. Homooctamer; the c-ring consists of eight c subunits forming a circle, and each subunit adopts a hairpin shape. Component of the ATP synthase complex composed at least of ATP5F1A/subunit alpha, ATP5F1B/subunit beta, ATP5MC1/subunit c (homooctomer), MT-ATP6/subunit a, MT-ATP8/subunit 8, ATP5ME/subunit e, ATP5MF/subunit f, ATP5MG/subunit g, ATP5MK/subunit k, ATP5MJ/subunit j, ATP5F1C/subunit gamma, ATP5F1D/subunit delta, ATP5F1E/subunit epsilon, ATP5PF/subunit F6, ATP5PB/subunit b, ATP5PD/subunit d, ATP5PO/subunit OSCP. ATP synthase complex consists of a soluble F(1) head domain (subunits alpha(3) and beta(3)) - the catalytic core - and a membrane F(0) domain - the membrane proton channel (subunits c, a, 8, e, f, g, k and j). These two domains are linked by a central stalk (subunits gamma, delta, and epsilon) rotating inside the F1 region and a stationary peripheral stalk (subunits F6, b, d, and OSCP). Interacts with TMEM70 (homooligomer form); this interaction facilitates the oligomer formation of subunit c/ATP5MC1 (c-ring) and the c-ring membrane insertion and also protects ATP5MC1 against intramitochondrial proteolysis. Post-translationally, trimethylated by ATPSCKMT at Lys-104. Methylation is required for proper incorporation of the C subunit into the ATP synthase complex and mitochondrial respiration.

The protein localises to the mitochondrion membrane. It catalyses the reaction H(+)(in) = H(+)(out). Functionally, subunit c, of the mitochondrial membrane ATP synthase complex (F(1)F(0) ATP synthase or Complex V) that produces ATP from ADP in the presence of a proton gradient across the membrane which is generated by electron transport complexes of the respiratory chain. ATP synthase complex consist of a soluble F(1) head domain - the catalytic core - and a membrane F(1) domain - the membrane proton channel. These two domains are linked by a central stalk rotating inside the F(1) region and a stationary peripheral stalk. During catalysis, ATP synthesis in the catalytic domain of F(1) is coupled via a rotary mechanism of the central stalk subunits to proton translocation. With the subunit a (MT-ATP6), forms the proton-conducting channel in the F(0) domain, that contains two crucial half-channels (inlet and outlet) that facilitate proton movement from the mitochondrial intermembrane space (IMS) into the matrix. Protons are taken up via the inlet half-channel and released through the outlet half-channel, following a Grotthuss mechanism. This chain is ATP synthase F(0) complex subunit C1, mitochondrial, found in Ovis aries (Sheep).